A 1549-amino-acid chain; its full sequence is Ferredoxin-dependent glutamate synthase (1549 aa).

Cys37 functions as the For GATase activity in the catalytic mechanism. The Glutamine amidotransferase type-2 domain occupies 37 to 435; that stretch reads CGVGFIAHLD…PGEMIVLDLQ (399 aa). Residue 1116–1173 participates in FMN binding; the sequence is LHEVHCLLVENNLREKVILRVDGGLRTGQDVVMAALLGADEYGFGTIAMIAGGCIMAR. [3Fe-4S] cluster-binding residues include Cys1169, Cys1175, and Cys1180.

It belongs to the glutamate synthase family. As to quaternary structure, monomer. It depends on [3Fe-4S] cluster as a cofactor. FAD is required as a cofactor. FMN serves as cofactor.

It is found in the plastid. It localises to the chloroplast stroma. It carries out the reaction 2 oxidized [2Fe-2S]-[ferredoxin] + 2 L-glutamate = L-glutamine + 2 reduced [2Fe-2S]-[ferredoxin] + 2-oxoglutarate + 2 H(+). It participates in amino-acid biosynthesis; L-glutamate biosynthesis via GLT pathway; L-glutamate from 2-oxoglutarate and L-glutamine (ferredoxin route): step 1/1. The protein operates within energy metabolism; nitrogen metabolism. The sequence is that of Ferredoxin-dependent glutamate synthase (gltB) from Cyanidium caldarium (Red alga).